A 102-amino-acid polypeptide reads, in one-letter code: MSVLVAFSVTPLGVGEGVGEIVTEAIRVVRDSGLPNQTDAMFTVIEGDTWAEVMAVVQRAVEAVAARAPRVSAVIKVDWRPGVTDAMTQKVATVERYLLRPE.

Belongs to the UPF0045 family.

This Mycobacterium bovis (strain ATCC BAA-935 / AF2122/97) protein is UPF0045 protein Mb1933.